The sequence spans 59 residues: Potassium channel toxin alpha-KTx 15.4 (59 aa).

An N-terminal signal peptide occupies residues 1-22; that stretch reads MKFSSIILLTLLICSMSIFGNC. A Pyrrolidone carboxylic acid modification is found at Gln-23. Intrachain disulfides connect Cys-30-Cys-50, Cys-35-Cys-55, and Cys-39-Cys-57.

Expressed by the venom gland.

It localises to the secreted. In terms of biological role, blocker of A-type voltage-gated potassium channels of cerebellar granular cells. May also inhibit Kv4/KCND when coexpressed with DPP6 or DPP10. The occlusion of the outer entry of the K(+) conducting pore is partially reversible and affects both open and closed channels. It shares the same target in rat brain than BmTX3 (AC Q8I0L5) and AmmTX3 (AC P60208). This chain is Potassium channel toxin alpha-KTx 15.4, found in Androctonus australis (Sahara scorpion).